A 227-amino-acid chain; its full sequence is Phage shock protein A homolog (227 aa).

Positions 33 to 125 (LRNMNSDLAK…AQMRKMHDKL (93 aa)) form a coiled coil. The tract at residues 191–211 (SAPQDDMADLSAKYDTGGSSQ) is disordered.

Belongs to the PspA/Vipp/IM30 family.

The protein is Phage shock protein A homolog (ydjF) of Bacillus subtilis (strain 168).